The chain runs to 160 residues: Ribosomal RNA large subunit methyltransferase H (160 aa).

The S-adenosyl-L-methionine site is built by L76 and G108.

Belongs to the RNA methyltransferase RlmH family. Homodimer.

It localises to the cytoplasm. The catalysed reaction is pseudouridine(1915) in 23S rRNA + S-adenosyl-L-methionine = N(3)-methylpseudouridine(1915) in 23S rRNA + S-adenosyl-L-homocysteine + H(+). Specifically methylates the pseudouridine at position 1915 (m3Psi1915) in 23S rRNA. This chain is Ribosomal RNA large subunit methyltransferase H, found in Bradyrhizobium diazoefficiens (strain JCM 10833 / BCRC 13528 / IAM 13628 / NBRC 14792 / USDA 110).